The sequence spans 324 residues: MGDTIKELLNPTVLSALLMGFAFSMVLGPIFIPMLHKLKFGQNIRTDGPKSHLKKSGTPTMGGLIFFISVSVTMLIIEYKPTDEGMIVLYSLIAFGIIGFLDDILKIIHRDNLGLRAYQKMILLLLFSIALAYYGYTNIGTDIIIPFMNSKLNLGIFYIPLVVVYYAATTNAVNLTDGIDGLASSVTVIVLTFFAIVGFKTGHYQVGVFSIALAGALLGFLRYNAFPAKIFMGDTGSLALGGAIATIALILKMPLFIIIVGGIYVVETLSVIIQVTSFKTTGKRVFKMAPIHHHFEQCGWSEVKLVTVFSIITLILCIIGFIAL.

9 helical membrane passes run 13 to 33 (VLSA…IFIP), 57 to 77 (GTPT…MLII), 85 to 105 (GMIV…DDIL), 121 to 141 (MILL…NIGT), 143 to 163 (IIIP…PLVV), 179 to 199 (IDGL…IVGF), 201 to 221 (TGHY…LGFL), 238 to 260 (LALG…IIIV), and 303 to 323 (VKLV…GFIA).

This sequence belongs to the glycosyltransferase 4 family. MraY subfamily. Requires Mg(2+) as cofactor.

It localises to the cell membrane. The enzyme catalyses UDP-N-acetyl-alpha-D-muramoyl-L-alanyl-gamma-D-glutamyl-meso-2,6-diaminopimeloyl-D-alanyl-D-alanine + di-trans,octa-cis-undecaprenyl phosphate = di-trans,octa-cis-undecaprenyl diphospho-N-acetyl-alpha-D-muramoyl-L-alanyl-D-glutamyl-meso-2,6-diaminopimeloyl-D-alanyl-D-alanine + UMP. It participates in cell wall biogenesis; peptidoglycan biosynthesis. In terms of biological role, catalyzes the initial step of the lipid cycle reactions in the biosynthesis of the cell wall peptidoglycan: transfers peptidoglycan precursor phospho-MurNAc-pentapeptide from UDP-MurNAc-pentapeptide onto the lipid carrier undecaprenyl phosphate, yielding undecaprenyl-pyrophosphoryl-MurNAc-pentapeptide, known as lipid I. The polypeptide is Phospho-N-acetylmuramoyl-pentapeptide-transferase (Clostridium botulinum (strain Eklund 17B / Type B)).